The following is a 411-amino-acid chain: Serine hydroxymethyltransferase (411 aa).

120-122 (GHL) is a binding site for (6S)-5,6,7,8-tetrahydrofolate. N6-(pyridoxal phosphate)lysine is present on Lys225. (6S)-5,6,7,8-tetrahydrofolate is bound at residue 350 to 352 (SPF).

The protein belongs to the SHMT family. As to quaternary structure, homodimer. Pyridoxal 5'-phosphate serves as cofactor.

The protein resides in the cytoplasm. It carries out the reaction (6R)-5,10-methylene-5,6,7,8-tetrahydrofolate + glycine + H2O = (6S)-5,6,7,8-tetrahydrofolate + L-serine. It participates in one-carbon metabolism; tetrahydrofolate interconversion. Its pathway is amino-acid biosynthesis; glycine biosynthesis; glycine from L-serine: step 1/1. Its function is as follows. Catalyzes the reversible interconversion of serine and glycine with tetrahydrofolate (THF) serving as the one-carbon carrier. This reaction serves as the major source of one-carbon groups required for the biosynthesis of purines, thymidylate, methionine, and other important biomolecules. Also exhibits THF-independent aldolase activity toward beta-hydroxyamino acids, producing glycine and aldehydes, via a retro-aldol mechanism. This is Serine hydroxymethyltransferase from Lactobacillus johnsonii (strain CNCM I-12250 / La1 / NCC 533).